The following is a 233-amino-acid chain: 3-dehydroquinate dehydratase (233 aa).

Residues 34–36 (ELR) and arginine 64 each bind 3-dehydroquinate. Histidine 118 functions as the Proton donor/acceptor in the catalytic mechanism. Lysine 145 functions as the Schiff-base intermediate with substrate in the catalytic mechanism. 3-dehydroquinate-binding residues include arginine 185, serine 205, and glutamine 209.

It belongs to the type-I 3-dehydroquinase family. Homodimer.

The enzyme catalyses 3-dehydroquinate = 3-dehydroshikimate + H2O. The protein operates within metabolic intermediate biosynthesis; chorismate biosynthesis; chorismate from D-erythrose 4-phosphate and phosphoenolpyruvate: step 3/7. Its function is as follows. Involved in the third step of the chorismate pathway, which leads to the biosynthesis of aromatic amino acids. Catalyzes the cis-dehydration of 3-dehydroquinate (DHQ) and introduces the first double bond of the aromatic ring to yield 3-dehydroshikimate. The polypeptide is 3-dehydroquinate dehydratase (Coxiella burnetii (strain CbuK_Q154) (Coxiella burnetii (strain Q154))).